Here is a 139-residue protein sequence, read N- to C-terminus: ATP synthase epsilon chain (139 aa).

Belongs to the ATPase epsilon chain family. In terms of assembly, F-type ATPases have 2 components, CF(1) - the catalytic core - and CF(0) - the membrane proton channel. CF(1) has five subunits: alpha(3), beta(3), gamma(1), delta(1), epsilon(1). CF(0) has three main subunits: a, b and c.

Its subcellular location is the cell inner membrane. Produces ATP from ADP in the presence of a proton gradient across the membrane. This is ATP synthase epsilon chain from Enterobacter sp. (strain 638).